The sequence spans 374 residues: Protein-glutamate methylesterase/protein-glutamine glutaminase (374 aa).

The region spanning 4–121 (KVLVVDDSGF…SRNPDKVKQM (118 aa)) is the Response regulatory domain. 4-aspartylphosphate is present on aspartate 55. The segment at 144-186 (PVAAPVPASSPAPASSFASPAPARPAATARAAAPAASHSPAPK) is disordered. Residues 154–183 (PAPASSFASPAPARPAATARAAAPAASHSP) are compositionally biased toward low complexity. Positions 183 to 374 (PAPKRKPYKL…IGKHLVEACV (192 aa)) constitute a CheB-type methylesterase domain. Residues serine 198, histidine 225, and aspartate 318 contribute to the active site.

Belongs to the CheB family. Post-translationally, phosphorylated by CheA. Phosphorylation of the N-terminal regulatory domain activates the methylesterase activity.

Its subcellular location is the cytoplasm. It carries out the reaction [protein]-L-glutamate 5-O-methyl ester + H2O = L-glutamyl-[protein] + methanol + H(+). The catalysed reaction is L-glutaminyl-[protein] + H2O = L-glutamyl-[protein] + NH4(+). Its function is as follows. Involved in chemotaxis. Part of a chemotaxis signal transduction system that modulates chemotaxis in response to various stimuli. Catalyzes the demethylation of specific methylglutamate residues introduced into the chemoreceptors (methyl-accepting chemotaxis proteins or MCP) by CheR. Also mediates the irreversible deamidation of specific glutamine residues to glutamic acid. This chain is Protein-glutamate methylesterase/protein-glutamine glutaminase, found in Pseudomonas putida (Arthrobacter siderocapsulatus).